The primary structure comprises 273 residues: 3-((Z)-2-isocyanoethenyl)-1H-indole synthase (273 aa).

Fe cation is bound by residues His-105, Asp-107, and His-254.

It belongs to the TfdA dioxygenase family. Fe(2+) is required as a cofactor.

It catalyses the reaction (2S)-3-(1H-indol-3-yl)-2-isocyanopropanoate + 2-oxoglutarate + O2 + H(+) = 3-[(Z)-2-isocyanoethenyl]-1H-indole + succinate + 2 CO2 + H2O. Functionally, involved in the biosynthesis of ambiguines, a family of hapalindole-type alkaloids. Responsible for the synthesis of Z-3-(2-isocyanoethen)-indole, a biosynthetic precursor to all ambiguines. The protein is 3-((Z)-2-isocyanoethenyl)-1H-indole synthase of Fischerella ambigua (strain UTEX 1903).